We begin with the raw amino-acid sequence, 194 residues long: Probable GTP-binding protein EngB (194 aa).

Residues 22 to 194 (DLPEYALAGR…AWQFIKEGME (173 aa)) form the EngB-type G domain. Residues 30–37 (GRSNVGKS), 57–61 (GKTQT), 75–78 (DVPG), 142–145 (TKAD), and 174–176 (FSS) contribute to the GTP site. Mg(2+)-binding residues include Ser37 and Thr59.

It belongs to the TRAFAC class TrmE-Era-EngA-EngB-Septin-like GTPase superfamily. EngB GTPase family. The cofactor is Mg(2+).

Necessary for normal cell division and for the maintenance of normal septation. The chain is Probable GTP-binding protein EngB from Listeria welshimeri serovar 6b (strain ATCC 35897 / DSM 20650 / CCUG 15529 / CIP 8149 / NCTC 11857 / SLCC 5334 / V8).